We begin with the raw amino-acid sequence, 323 residues long: Isoeugenol synthase 1 (323 aa).

Residues 14 to 17 (TGYL), 36 to 47 (VMPLKKNSDDSK), 88 to 90 (VPQ), 113 to 115 (SEF), Lys-135, and 155 to 157 (NSL) contribute to the NADP(+) site. The Proton donor/acceptor role is filled by Lys-135.

The protein belongs to the NmrA-type oxidoreductase family. In terms of tissue distribution, expressed in flowers, especially in corolla and tubes of petals, probably in both epidermal and mesophyll cell layers.

The catalysed reaction is (E)-isoeugenol + acetate + NADP(+) = (E)-coniferyl acetate + NADPH. It functions in the pathway aromatic compound metabolism; phenylpropanoid biosynthesis. With respect to regulation, inhibited by zinc and copper ions. Repressed by 4-bromo-cinnamyl acetate. Functionally, involved in the biosynthesis of the floral volatile isoeugenol. Catalyzes the synthesis of the phenylpropene isoeugenol from coniferyl acetate. Phenylpropenes are the primary constituents of various essential plant oils. They are produced as antimicrobial and antianimal compounds, or as floral attractants of pollinators. Isoeugenol is a characteristic aromatic constituent of spices and a floral volatile compound. In Petunia hybrida (Petunia), this protein is Isoeugenol synthase 1.